Reading from the N-terminus, the 434-residue chain is Glutamate-1-semialdehyde 2,1-aminomutase (434 aa).

Position 266 is an N6-(pyridoxal phosphate)lysine (Lys-266).

It belongs to the class-III pyridoxal-phosphate-dependent aminotransferase family. HemL subfamily. In terms of assembly, homodimer. Pyridoxal 5'-phosphate serves as cofactor.

Its subcellular location is the cytoplasm. The enzyme catalyses (S)-4-amino-5-oxopentanoate = 5-aminolevulinate. Its pathway is porphyrin-containing compound metabolism; protoporphyrin-IX biosynthesis; 5-aminolevulinate from L-glutamyl-tRNA(Glu): step 2/2. The protein is Glutamate-1-semialdehyde 2,1-aminomutase of Psychrobacter sp. (strain PRwf-1).